The chain runs to 123 residues: Large ribosomal subunit protein uL29 (123 aa).

It belongs to the universal ribosomal protein uL29 family.

The chain is Large ribosomal subunit protein uL29 (RPL35) from Theileria parva (East coast fever infection agent).